A 326-amino-acid polypeptide reads, in one-letter code: Fructose-1,6-bisphosphatase class 1 (326 aa).

This sequence belongs to the FBPase class 1 family. As to quaternary structure, homotetramer.

Its subcellular location is the cytoplasm. It carries out the reaction beta-D-fructose 1,6-bisphosphate + H2O = beta-D-fructose 6-phosphate + phosphate. Its pathway is carbohydrate biosynthesis; gluconeogenesis. This Methylobacterium sp. (strain 4-46) protein is Fructose-1,6-bisphosphatase class 1.